Here is an 87-residue protein sequence, read N- to C-terminus: NAD(P)H-quinone oxidoreductase subunit O (87 aa).

A compositionally biased stretch (basic and acidic residues) spans 1-10 (MSEQTGKVDD). Residues 1–26 (MSEQTGKVDDSQSPPKVQKKLRKGDL) form a disordered region.

This sequence belongs to the complex I NdhO subunit family. As to quaternary structure, NDH-1 can be composed of about 15 different subunits; different subcomplexes with different compositions have been identified which probably have different functions.

It localises to the cellular thylakoid membrane. It carries out the reaction a plastoquinone + NADH + (n+1) H(+)(in) = a plastoquinol + NAD(+) + n H(+)(out). It catalyses the reaction a plastoquinone + NADPH + (n+1) H(+)(in) = a plastoquinol + NADP(+) + n H(+)(out). Its function is as follows. NDH-1 shuttles electrons from an unknown electron donor, via FMN and iron-sulfur (Fe-S) centers, to quinones in the respiratory and/or the photosynthetic chain. The immediate electron acceptor for the enzyme in this species is believed to be plastoquinone. Couples the redox reaction to proton translocation, and thus conserves the redox energy in a proton gradient. Cyanobacterial NDH-1 also plays a role in inorganic carbon-concentration. This Prochlorococcus marinus (strain NATL1A) protein is NAD(P)H-quinone oxidoreductase subunit O.